The chain runs to 143 residues: MSDNTGAPDVQVETTSVFRADLLKEMESGAGAATASGSDVTPPAGAGMLVVKRGPNAGARFLLDRPTTTAGRHPESDIFLDDVTVSRRHAEFRRQDGSFEVVDVGSLNGTYVNREPRNSEVLSSGDEVQIGKFRLVFIEGPRA.

A Phosphothreonine modification is found at Thr-14. A compositionally biased stretch (low complexity) spans 29–38 (GAGAATASGS). The tract at residues 29-50 (GAGAATASGSDVTPPAGAGMLV) is disordered. In terms of domain architecture, FHA spans 68–117 (TTAGRHPESDIFLDDVTVSRRHAEFRRQDGSFEVVDVGSLNGTYVNREPR).

It is found in the cytoplasm. In terms of biological role, an essential component of the PknG signaling pathway. When unphosphorylated, it inhibits the activity of 2-oxoglutarate dehydrogenase. When phosphorylated it does not inhibit 2-oxoglutarate dehydrogenase. This chain is Oxoglutarate dehydrogenase inhibitor (odhI), found in Corynebacterium diphtheriae (strain ATCC 700971 / NCTC 13129 / Biotype gravis).